We begin with the raw amino-acid sequence, 257 residues long: Large ribosomal subunit protein uL2 (257 aa).

The disordered stretch occupies residues 210-231 (PHGGGNHQHIGKASTVKRGTSA).

Belongs to the universal ribosomal protein uL2 family.

The protein localises to the cytoplasm. The sequence is that of Large ribosomal subunit protein uL2 (RpL8) from Mamestra brassicae (Cabbage moth).